We begin with the raw amino-acid sequence, 541 residues long: Chaperonin GroEL (541 aa).

Residues 29–32, 86–90, G413, 478–480, and D494 each bind ATP; these read TIGP, DGTTT, and NAA.

The protein belongs to the chaperonin (HSP60) family. In terms of assembly, forms a cylinder of 14 subunits composed of two heptameric rings stacked back-to-back. Interacts with the co-chaperonin GroES.

The protein resides in the cytoplasm. It catalyses the reaction ATP + H2O + a folded polypeptide = ADP + phosphate + an unfolded polypeptide.. Its function is as follows. Together with its co-chaperonin GroES, plays an essential role in assisting protein folding. The GroEL-GroES system forms a nano-cage that allows encapsulation of the non-native substrate proteins and provides a physical environment optimized to promote and accelerate protein folding. The chain is Chaperonin GroEL from Oenococcus oeni (strain ATCC BAA-331 / PSU-1).